Consider the following 239-residue polypeptide: Small ribosomal subunit protein uS2 (239 aa).

It belongs to the universal ribosomal protein uS2 family.

The protein is Small ribosomal subunit protein uS2 of Francisella tularensis subsp. tularensis (strain WY96-3418).